The primary structure comprises 275 residues: Calcium uniporter protein, mitochondrial (275 aa).

A mitochondrion-targeting transit peptide spans 1–28 (MNSFVIRNGFGLVRTFNTRLFTTSTQNL). Residues 29–165 (EGELKTILGQ…DRKAHRRATA (137 aa)) are Mitochondrial matrix-facing. A coiled-coil region spans residues 125-157 (VGLNKLIESKKSEINSLRQKIQPLEEKKQVIDR). A helical membrane pass occupies residues 166–186 (IIWTGLGYCFAQAAILARLTW). The Mitochondrial intermembrane portion of the chain corresponds to 187 to 192 (WDLSWD). The Selectivity filter motif lies at 191–199 (WDIIEPVSY). The helical transmembrane segment at 193 to 213 (IIEPVSYFLTFGSVLIGYTYF) threads the bilayer. Glu-195 is a binding site for Ca(2+). Residues 214 to 275 (TMTKTEFTYE…ELATKYDHTH (62 aa)) are Mitochondrial matrix-facing. The stretch at 244 to 270 (PKEDYENLVQAIDKKEKELKELELATK) forms a coiled coil.

Belongs to the MCU (TC 1.A.77) family. In terms of assembly, homooligomer.

Its subcellular location is the mitochondrion inner membrane. The enzyme catalyses Ca(2+)(in) = Ca(2+)(out). Its activity is regulated as follows. Inhibited by ruthenium red or its derivative Ru360. Mitochondrial inner membrane calcium uniporter that mediates calcium uptake into mitochondria. Constitutes a pore-forming and calcium-conducting subunit. Mitochondrial calcium homeostasis plays key roles in cellular physiology and regulates cell bioenergetics, cytoplasmic calcium signals and activation of cell death pathways. Sufficient to operate as a pore-forming channel without the need of calcium-sensor or auxiliary subunit. In Dictyostelium discoideum (Social amoeba), this protein is Calcium uniporter protein, mitochondrial.